A 108-amino-acid polypeptide reads, in one-letter code: UPF0060 membrane protein Nham_2004 (108 aa).

The next 4 membrane-spanning stretches (helical) occupy residues 5 to 25 (AAYV…WAWL), 31 to 51 (VWWL…LTLV), 61 to 81 (AAYG…VEGL), and 88 to 108 (LTGA…PRQI).

Belongs to the UPF0060 family.

Its subcellular location is the cell inner membrane. The sequence is that of UPF0060 membrane protein Nham_2004 from Nitrobacter hamburgensis (strain DSM 10229 / NCIMB 13809 / X14).